Here is a 598-residue protein sequence, read N- to C-terminus: Aspartate--tRNA(Asp/Asn) ligase (598 aa).

Glu172 lines the L-aspartate pocket. The aspartate stretch occupies residues 196–199 (QLFK). Arg218 contacts L-aspartate. ATP contacts are provided by residues 218–220 (RDE) and Gln227. His455 provides a ligand contact to L-aspartate. Residue Glu489 participates in ATP binding. Arg496 serves as a coordination point for L-aspartate. 541-544 (GLDR) contributes to the ATP binding site.

Belongs to the class-II aminoacyl-tRNA synthetase family. Type 1 subfamily. In terms of assembly, homodimer.

The protein resides in the cytoplasm. The catalysed reaction is tRNA(Asx) + L-aspartate + ATP = L-aspartyl-tRNA(Asx) + AMP + diphosphate. Aspartyl-tRNA synthetase with relaxed tRNA specificity since it is able to aspartylate not only its cognate tRNA(Asp) but also tRNA(Asn). Reaction proceeds in two steps: L-aspartate is first activated by ATP to form Asp-AMP and then transferred to the acceptor end of tRNA(Asp/Asn). The polypeptide is Aspartate--tRNA(Asp/Asn) ligase (Burkholderia mallei (strain ATCC 23344)).